A 173-amino-acid chain; its full sequence is Ribosome maturation factor RimM (173 aa).

The region spanning 78 to 157 (EEEFYLADLI…VLVVPPEEVE (80 aa)) is the PRC barrel domain. The tract at residues 152–173 (PPEEVEAQEPPEKDAGGDEPSP) is disordered.

The protein belongs to the RimM family. Binds ribosomal protein uS19.

The protein localises to the cytoplasm. Functionally, an accessory protein needed during the final step in the assembly of 30S ribosomal subunit, possibly for assembly of the head region. Essential for efficient processing of 16S rRNA. May be needed both before and after RbfA during the maturation of 16S rRNA. It has affinity for free ribosomal 30S subunits but not for 70S ribosomes. The polypeptide is Ribosome maturation factor RimM (Beijerinckia indica subsp. indica (strain ATCC 9039 / DSM 1715 / NCIMB 8712)).